Reading from the N-terminus, the 251-residue chain is Thiamine thiazole synthase (251 aa).

Residues S34, 53-54 (EK), G61, V125, and 151-153 (HVD) each bind NAD(+). The Fe cation site is built by D153 and H168. M216 provides a ligand contact to NAD(+). Residue R226 coordinates glycine.

Belongs to the THI4 family. Homooctamer; tetramer of dimers. Fe(2+) serves as cofactor.

The enzyme catalyses hydrogen sulfide + glycine + NAD(+) = ADP-5-ethyl-4-methylthiazole-2-carboxylate + nicotinamide + 3 H2O + H(+). It participates in cofactor biosynthesis; thiamine diphosphate biosynthesis. Involved in the biosynthesis of the thiazole moiety of thiamine. Catalyzes the conversion of NAD and glycine to adenosine diphosphate 5-(2-hydroxyethyl)-4-methylthiazole-2-carboxylate (ADT), an adenylated thiazole intermediate, using free sulfide as a source of sulfur. In Thermococcus kodakarensis (strain ATCC BAA-918 / JCM 12380 / KOD1) (Pyrococcus kodakaraensis (strain KOD1)), this protein is Thiamine thiazole synthase.